The chain runs to 420 residues: Dihydrolipoyllysine-residue succinyltransferase component of 2-oxoglutarate dehydrogenase complex (420 aa).

Residues 1–76 (MAEVKVPELA…EVGQAVAVVG (76 aa)) enclose the Lipoyl-binding domain. Position 42 is an N6-lipoyllysine (Lys42). The disordered stretch occupies residues 75–201 (VGEGQVNTSN…EKMSRRKKTA (127 aa)). Polar residues predominate over residues 81 to 90 (NTSNDSSNES). Residues 91-102 (SQKDEAKEKETP) are compositionally biased toward basic and acidic residues. The segment covering 103–127 (KQSNPNSSESENTQDNSQQRINATP) has biased composition (polar residues). The 37-residue stretch at 124–160 (NATPSARRHARKNGVDLSEVSGKGNDVLRKDDVENSQ) folds into the Peripheral subunit-binding (PSBD) domain. Residues 149 to 158 (DVLRKDDVEN) are compositionally biased toward basic and acidic residues. Over residues 159–188 (SQKSSSQTAKSESKSQNSGSKQSNNNPSKP) the composition is skewed to low complexity. Catalysis depends on residues His391 and Asp395.

The protein belongs to the 2-oxoacid dehydrogenase family. As to quaternary structure, forms a 24-polypeptide structural core with octahedral symmetry. Part of the 2-oxoglutarate dehydrogenase (OGDH) complex composed of E1 (2-oxoglutarate dehydrogenase), E2 (dihydrolipoamide succinyltransferase) and E3 (dihydrolipoamide dehydrogenase); the complex contains multiple copies of the three enzymatic components (E1, E2 and E3). It depends on (R)-lipoate as a cofactor.

The catalysed reaction is N(6)-[(R)-dihydrolipoyl]-L-lysyl-[protein] + succinyl-CoA = N(6)-[(R)-S(8)-succinyldihydrolipoyl]-L-lysyl-[protein] + CoA. The protein operates within amino-acid degradation; L-lysine degradation via saccharopine pathway; glutaryl-CoA from L-lysine: step 6/6. E2 component of the 2-oxoglutarate dehydrogenase (OGDH) complex which catalyzes the second step in the conversion of 2-oxoglutarate to succinyl-CoA and CO(2). In Staphylococcus epidermidis (strain ATCC 12228 / FDA PCI 1200), this protein is Dihydrolipoyllysine-residue succinyltransferase component of 2-oxoglutarate dehydrogenase complex (odhB).